The chain runs to 146 residues: MIVKKKVQSCIKLQIEARSATPSPPIGPALGQQGINIMKFCKDFNTRTADFEMGLILPVVITVYVDRSFSFVIKTPTAVFLLKKAAGIKSGSEKPKCVSVGKVLISQIYEIAKIKLIDMTSLNLESASKSIMGTARSIGLEVEDNL.

Belongs to the universal ribosomal protein uL11 family. In terms of assembly, part of the ribosomal stalk of the 50S ribosomal subunit. Interacts with L10 and the large rRNA to form the base of the stalk. L10 forms an elongated spine to which L12 dimers bind in a sequential fashion forming a multimeric L10(L12)X complex. One or more lysine residues are methylated.

Functionally, forms part of the ribosomal stalk which helps the ribosome interact with GTP-bound translation factors. This is Large ribosomal subunit protein uL11 from Blochmanniella floridana.